Here is a 393-residue protein sequence, read N- to C-terminus: 4-hydroxyphenylpyruvate dioxygenase (393 aa).

VOC domains lie at 17-148 (AFDH…LLER) and 179-339 (FLDH…IFSK). Fe cation is bound by residues H182, H267, and E350.

It belongs to the 4HPPD family. Fe cation serves as cofactor. As to expression, expressed in the hypodermis and intestine.

It catalyses the reaction 3-(4-hydroxyphenyl)pyruvate + O2 = homogentisate + CO2. The protein operates within amino-acid degradation; L-phenylalanine degradation; acetoacetate and fumarate from L-phenylalanine: step 3/6. Key enzyme in the degradation of tyrosine. The polypeptide is 4-hydroxyphenylpyruvate dioxygenase (Caenorhabditis elegans).